The primary structure comprises 366 residues: Erythronate-4-phosphate dehydrogenase (366 aa).

2 residues coordinate substrate: serine 46 and threonine 67. Residues aspartate 147 and threonine 175 each contribute to the NAD(+) site. Arginine 208 is an active-site residue. Aspartate 228 contributes to the NAD(+) binding site. Glutamate 233 is a catalytic residue. Histidine 250 serves as the catalytic Proton donor. Glycine 253 lines the NAD(+) pocket. Tyrosine 254 provides a ligand contact to substrate.

This sequence belongs to the D-isomer specific 2-hydroxyacid dehydrogenase family. PdxB subfamily. As to quaternary structure, homodimer.

It localises to the cytoplasm. The catalysed reaction is 4-phospho-D-erythronate + NAD(+) = (R)-3-hydroxy-2-oxo-4-phosphooxybutanoate + NADH + H(+). It functions in the pathway cofactor biosynthesis; pyridoxine 5'-phosphate biosynthesis; pyridoxine 5'-phosphate from D-erythrose 4-phosphate: step 2/5. Its function is as follows. Catalyzes the oxidation of erythronate-4-phosphate to 3-hydroxy-2-oxo-4-phosphonooxybutanoate. This is Erythronate-4-phosphate dehydrogenase from Coxiella burnetii (strain Dugway 5J108-111).